The primary structure comprises 193 residues: Probable nicotinate-nucleotide adenylyltransferase (193 aa).

The protein belongs to the NadD family.

It catalyses the reaction nicotinate beta-D-ribonucleotide + ATP + H(+) = deamido-NAD(+) + diphosphate. The protein operates within cofactor biosynthesis; NAD(+) biosynthesis; deamido-NAD(+) from nicotinate D-ribonucleotide: step 1/1. Catalyzes the reversible adenylation of nicotinate mononucleotide (NaMN) to nicotinic acid adenine dinucleotide (NaAD). This chain is Probable nicotinate-nucleotide adenylyltransferase, found in Fusobacterium nucleatum subsp. nucleatum (strain ATCC 25586 / DSM 15643 / BCRC 10681 / CIP 101130 / JCM 8532 / KCTC 2640 / LMG 13131 / VPI 4355).